The sequence spans 314 residues: NF-kappa-B inhibitor alpha (314 aa).

The interval 1–41 (MFQPAEPGQEWAMEGPRDALKKERLLDDRHDSGLDSMKDEE) is disordered. Over residues 15 to 41 (GPRDALKKERLLDDRHDSGLDSMKDEE) the composition is skewed to basic and acidic residues. Residue Lys21 forms a Glycyl lysine isopeptide (Lys-Gly) (interchain with G-Cter in SUMO); alternate linkage. Residue Lys21 forms a Glycyl lysine isopeptide (Lys-Gly) (interchain with G-Cter in ubiquitin); alternate linkage. Residue Lys22 forms a Glycyl lysine isopeptide (Lys-Gly) (interchain with G-Cter in ubiquitin) linkage. The short motif at 30–36 (HDSGLDS) is the Destruction motif element. Ser32 is subject to Phosphoserine; by IKKA and IKKB. The residue at position 36 (Ser36) is a Phosphoserine; by IKKA, IKKB, IKKE and TBK1. Phosphotyrosine; by Tyr-kinases is present on Tyr42. The Nuclear export signal motif lies at 45 to 54 (MVKELREIRL). The Nuclear import signal signature appears at 110-120 (LQQTPLHLAVI). ANK repeat units lie at residues 110 to 139 (LQQT…DPEL), 143 to 172 (RGNT…TQHL), 182 to 211 (NGHT…DVNA), and 216 to 245 (NGRT…DVNR). Asn210 and Asn244 each carry (3S)-3-hydroxyasparagine; by HIF1AN. Ser283 and Ser288 each carry phosphoserine; by CK2. Thr291 is subject to Phosphothreonine; by CK2. The residue at position 293 (Ser293) is a Phosphoserine; by CK2. Thr296 is modified (phosphothreonine).

It belongs to the NF-kappa-B inhibitor family. Interacts with RELA; the interaction requires the nuclear import signal. Part of a 70-90 kDa complex at least consisting of CHUK, IKBKB, NFKBIA, RELA, ELP1 and MAP3K14. Interacts with NKIRAS1 and NKIRAS2. Interacts with RWDD3; the interaction enhances sumoylation. Interacts with PRMT2. Interacts with PRKACA in platelets; this interaction is disrupted by thrombin and collagen. Interacts with MEFV. Interacts with DDRGK1; positively regulates NFKBIA phosphorylation and degradation. Interacts with HNRNPA2B1; the interaction may be mediated by the RRM2 domain of HNRNPA2B1, and HNRNPA2B1 may interact simultaneously with FAM76B and either NFKBIA or NFKBIE to form a complex. Post-translationally, phosphorylated at Ser-32 and Ser-36 by IKKA/CHUK and IKKB/IKBKB; disables inhibition of NF-kappa-B DNA-binding activity. Phosphorylation at positions 32 and 36 is prerequisite to recognition by the SCF(FBXW11) and SCF(BTRC) complexes, leading to polyubiquitination and subsequent degradation. In terms of processing, polyubiquitinated at Lys-21 and/or Lys-22 following phosphorylation at Ser-32 and Ser-36. Monoubiquitinated at Lys-21 and/or Lys-22 by UBE2D3. Ubiquitin chain elongation is then performed by CDC34 in cooperation with the SCF(FBXW11) E3 ligase complex, building ubiquitin chains from the UBE2D3-primed NFKBIA-linked ubiquitin. The resulting polyubiquitination leads to protein degradation. Also ubiquitinated by the SCF(BTRC) complex following stimulus-dependent phosphorylation at Ser-32 and Ser-36. Deubiquitinated by USP38, leading to NF-kappa-B inhibition. Sumoylated; sumoylation requires the presence of the nuclear import signal. Sumoylation blocks ubiquitination and proteasome-mediated degradation of the protein thereby increasing the protein stability. Post-translationally, hydroxylated by HIF1AN.

The protein localises to the cytoplasm. It is found in the nucleus. In terms of biological role, inhibits the activity of dimeric NF-kappa-B/REL complexes by trapping REL (RELA/p65 and NFKB1/p50) dimers in the cytoplasm by masking their nuclear localization signals. On cellular stimulation by immune and pro-inflammatory responses, becomes phosphorylated promoting ubiquitination and degradation, enabling the dimeric RELA to translocate to the nucleus and activate transcription. This chain is NF-kappa-B inhibitor alpha (NFKBIA), found in Sus scrofa (Pig).